An 871-amino-acid polypeptide reads, in one-letter code: Nonsense-mediated mRNA decay factor SMG8 (871 aa).

The tract at residues 541–596 (LDDMELPESLQQSYTSSEDSSEDDDDFAIQTASSEDSLSGSDSYARPGSRRDEFES) is disordered. Over residues 573–583 (SSEDSLSGSDS) the composition is skewed to low complexity.

The protein belongs to the SMG8 family.

Functionally, involved in nonsense-mediated decay (NMD) of mRNAs containing premature stop codons. Probable component of kinase complex containing smg-1 and recruited to stalled ribosomes. The polypeptide is Nonsense-mediated mRNA decay factor SMG8 (smg-8) (Caenorhabditis briggsae).